The sequence spans 700 residues: Polyribonucleotide nucleotidyltransferase (700 aa).

D491 and D497 together coordinate Mg(2+). The 60-residue stretch at 558–617 (PNYAVIEINPDKIRDVIGKGGATIRQLTEETGAVIDIDDAGTIRIFGENKAATKAAIAKI) folds into the KH domain. An S1 motif domain is found at 627–695 (GKTYEGTVAR…NRGRIKLTMK (69 aa)).

This sequence belongs to the polyribonucleotide nucleotidyltransferase family. In terms of assembly, component of the RNA degradosome, which is a multiprotein complex involved in RNA processing and mRNA degradation. Mg(2+) is required as a cofactor.

The protein resides in the cytoplasm. The catalysed reaction is RNA(n+1) + phosphate = RNA(n) + a ribonucleoside 5'-diphosphate. Functionally, involved in mRNA degradation. Catalyzes the phosphorolysis of single-stranded polyribonucleotides processively in the 3'- to 5'-direction. The polypeptide is Polyribonucleotide nucleotidyltransferase (Psychrobacter cryohalolentis (strain ATCC BAA-1226 / DSM 17306 / VKM B-2378 / K5)).